The primary structure comprises 499 residues: Importin subunit alpha-8 (499 aa).

One can recognise an IBB domain in the interval 1–57 (MATSKAPKERLKNYKYRGKEMSLPRQQRIASSLQLRKTRKDEQVLKRRNIDLFSSDM). 8 ARM repeats span residues 101-141 (TPPL…NIAS), 144-183 (SEQTRAVVKEGAIQPLIELLCSPHLTVSEQAVWALGNIAG), 186-226 (AEFR…NLCR), 229-268 (DPYPSESAVRQMLPPLCQLLLHRDNEILADTCWALSYLTK), 271-310 (KEYIHHVVTTGILPRLVELMTSSELSISIPCLHTIGNIVA), 313-352 (DEQTQMAIDAGMLKVLGQVLKHPKTSIQVLAAWTMSNVAA), 354-393 (PRHQVEQLLCNLLPILVDLLRNAELKVQKEVVCTVINIAT), and 397-436 (QDQLTLLAHSGILEPMLSLLSAPDLEVVIIVLDIISYLLQ).

The protein belongs to the importin alpha family. In terms of assembly, binds to importin subunit beta-1/KPNB1 via the IBB domain; this complex dissociates in the presence of RAN-GTP. Shows a limited binding to the RB1 nuclear localization signal (NLS), but not to the SV40, nor NPM1 NLSs. Interacts with RSL1D1. In terms of tissue distribution, expressed predominantly in ovary. Isoform 1 is the predominant form.

It is found in the nucleus. Functions in nuclear protein import. This is Importin subunit alpha-8 (Kpna7) from Mus musculus (Mouse).